The sequence spans 279 residues: NADH dehydrogenase [ubiquinone] iron-sulfur protein 3, mitochondrial (279 aa).

The N-terminal 27 residues, 1 to 27, are a transit peptide targeting the mitochondrion; sequence MISRTLLKRSLPTVQFLRPFTRSSIRR. The tract at residues 249-279 is disordered; it reads EPVGEGKDFTPESFKLPTPEPEPEKESDEKK. A compositionally biased stretch (basic and acidic residues) spans 270 to 279; sequence EPEKESDEKK.

This sequence belongs to the complex I 30 kDa subunit family. As to quaternary structure, core subunit of respiratory chain NADH dehydrogenase (Complex I).

It localises to the mitochondrion inner membrane. The enzyme catalyses a ubiquinone + NADH + 5 H(+)(in) = a ubiquinol + NAD(+) + 4 H(+)(out). Functionally, core subunit of the mitochondrial membrane respiratory chain NADH dehydrogenase (Complex I) which catalyzes electron transfer from NADH through the respiratory chain, using ubiquinone as an electron acceptor. Plays a role in cell wall integrity and is involved in osmotic and oxidative resistance, yeast to hypha transition and the ability to damage and invade oral epithelial cells. This chain is NADH dehydrogenase [ubiquinone] iron-sulfur protein 3, mitochondrial (ALI1), found in Candida albicans (strain SC5314 / ATCC MYA-2876) (Yeast).